The chain runs to 409 residues: DNA double-strand break repair protein Mre11 (409 aa).

4 residues coordinate Mn(2+): Asp9, His11, Asp50, and Glu85. The Proton donor role is filled by His86. Residues His170, His199, and His201 each coordinate Mn(2+).

This sequence belongs to the MRE11/RAD32 family. Homodimer. Forms a heterotetramer composed of two Mre11 subunits and two Rad50 subunits. It depends on Mn(2+) as a cofactor.

Its activity is regulated as follows. Nuclease activity is regulated by Rad50. In terms of biological role, part of the Rad50/Mre11 complex, which is involved in the early steps of DNA double-strand break (DSB) repair. The complex may facilitate opening of the processed DNA ends to aid in the recruitment of HerA and NurA. Mre11 binds to DSB ends and has both double-stranded 3'-5' exonuclease activity and single-stranded endonuclease activity. This is DNA double-strand break repair protein Mre11 from Aeropyrum pernix (strain ATCC 700893 / DSM 11879 / JCM 9820 / NBRC 100138 / K1).